Consider the following 89-residue polypeptide: Small ribosomal subunit protein uS14 (89 aa).

The protein belongs to the universal ribosomal protein uS14 family. Part of the 30S ribosomal subunit. Contacts proteins S3 and S10.

Its function is as follows. Binds 16S rRNA, required for the assembly of 30S particles and may also be responsible for determining the conformation of the 16S rRNA at the A site. This is Small ribosomal subunit protein uS14 from Oenococcus oeni (strain ATCC BAA-331 / PSU-1).